The following is a 328-amino-acid chain: Eukaryotic translation initiation factor 3 subunit I (328 aa).

WD repeat units lie at residues Gly-8 to Glu-49, Gly-50 to Lys-89, Thr-145 to Ser-184, Asn-189 to Thr-228, and Gly-286 to Thr-327.

The protein belongs to the eIF-3 subunit I family. As to quaternary structure, component of the eukaryotic translation initiation factor 3 (eIF-3) complex. The eIF-3 complex appears to include tif32/eif3a, SPAC25G10.08/eif3b, tif33/eif3c, SPBC4C3.07/eif3f, tif35/eif3g and sum1/eif3i. This set of common subunits may also associate exclusively with either moe1/eif3d and int6/eif3e, or with SPAC821.05/eif3h and SPAC1751.03/eif3m. The eIF-3 complex may also include SPAC3A12.13c/eif3j.

The protein localises to the cytoplasm. The protein resides in the nucleus. Functionally, component of the eukaryotic translation initiation factor 3 (eIF-3) complex, which is involved in protein synthesis of a specialized repertoire of mRNAs and, together with other initiation factors, stimulates binding of mRNA and methionyl-tRNAi to the 40S ribosome. The eIF-3 complex specifically targets and initiates translation of a subset of mRNAs involved in cell proliferation. The chain is Eukaryotic translation initiation factor 3 subunit I (sum1) from Schizosaccharomyces pombe (strain 972 / ATCC 24843) (Fission yeast).